A 335-amino-acid polypeptide reads, in one-letter code: Serpentine receptor class alpha-13 (335 aa).

Topologically, residues 1–25 are extracellular; sequence MAIISSVNRTCASESLLELYRSYKY. A helical transmembrane segment spans residues 26–46; that stretch reads ILSTSFNIIIPIISLFFLVYA. Residues 47–61 lie on the Cytoplasmic side of the membrane; that stretch reads IKQLCAQSIIQYSTR. Residues 62–82 traverse the membrane as a helical segment; sequence VLLITTILFAVCHQIAYFCFK. Residues 83-108 are Extracellular-facing; it reads ADLLYTMLFKLDQPCNLQHSSYDCRF. The chain crosses the membrane as a helical span at residues 109–129; that stretch reads ITIATTTSNCGMALVQLAMSI. The Cytoplasmic portion of the chain corresponds to 130–146; it reads DRVFALKFNRVYYKLKS. The chain crosses the membrane as a helical span at residues 147–167; sequence IPGITLALITLSISFSMFFIL. Over 168–192 the chain is Extracellular; that stretch reads TIDDPLSGYVNHCGFYPTYSQDKFH. The chain crosses the membrane as a helical span at residues 193-213; sequence IFLDVTLYLAVFNFVFDIGLM. Residues 214–243 lie on the Cytoplasmic side of the membrane; that stretch reads YYSYQEILWKRSYSFVNRFQSRISLKCTQA. A helical transmembrane segment spans residues 244–264; sequence IFIISICQCISNVLYSGLLSL. Residues 265–278 lie on the Extracellular side of the membrane; sequence LMKLGRYMSSADYN. Residues 279–299 form a helical membrane-spanning segment; that stretch reads LSLSLAYTTPYSCLILPILIC. Topologically, residues 300–335 are cytoplasmic; it reads KVLEYIKKQRTVGILSLRNQKQSMEGHMAMINSAWK.

Belongs to the nematode receptor-like protein sra family. As to expression, expressed in the AWA and AWC chemosensory neurons.

Its subcellular location is the membrane. Functionally, chemosensory receptor that negatively regulates RAS/MAPK signaling during vulva induction and the negative regulation of olfaction of volitile attractants. Required for the suppression of vulval induction in response to food starvation. Signaling acts through the GPA-5 G-alpha protein subunit. The protein is Serpentine receptor class alpha-13 (sra-13) of Caenorhabditis elegans.